Here is a 173-residue protein sequence, read N- to C-terminus: Alpha-crystallin A chain (173 aa).

Met-1 bears the N-acetylmethionine mark. The interval Met-1–Glu-63 is required for complex formation with BFSP1 and BFSP2. Gln-6 carries the post-translational modification Deamidated glutamine; partial. Ser-45 carries the phosphoserine modification. Position 50 is a deamidated glutamine; partial (Gln-50). The region spanning Leu-52–Ser-162 is the sHSP domain. The residue at position 70 (Lys-70) is an N6-acetyllysine. Position 90 is a deamidated glutamine; partial (Gln-90). Residue Lys-99 is modified to N6-acetyllysine. A Zn(2+)-binding site is contributed by His-100. The residue at position 101 (Asn-101) is a Deamidated asparagine; partial. Zn(2+) contacts are provided by Glu-102 and His-107. Position 122 is a phosphoserine (Ser-122). Asn-123 bears the Deamidated asparagine; partial mark. The segment at Pro-144–Ser-173 is disordered. Residues Gly-153–Pro-167 show a composition bias toward basic and acidic residues. His-154 contributes to the Zn(2+) binding site. O-linked (GlcNAc) serine glycosylation is present at Ser-162.

It belongs to the small heat shock protein (HSP20) family. In terms of assembly, heteromer composed of three CRYAA and one CRYAB subunits. Inter-subunit bridging via zinc ions enhances stability, which is crucial as there is no protein turn over in the lens. Can also form homodimers and homotetramers (dimers of dimers) which serve as the building blocks of homooligomers. Within homooligomers, the zinc-binding motif is created from residues of 3 different molecules. His-100 and Glu-102 from one molecule are ligands of the zinc ion, and His-107 and His-154 residues from additional molecules complete the site with tetrahedral coordination geometry. Part of a complex required for lens intermediate filament formation composed of BFSP1, BFSP2 and CRYAA. In terms of processing, acetylation at Lys-70 may increase chaperone activity. Undergoes age-dependent proteolytical cleavage at the C-terminus.

Its subcellular location is the cytoplasm. The protein resides in the nucleus. In terms of biological role, contributes to the transparency and refractive index of the lens. Acts as a chaperone, preventing aggregation of various proteins under a wide range of stress conditions. Required for the correct formation of lens intermediate filaments as part of a complex composed of BFSP1, BFSP2 and CRYAA. This chain is Alpha-crystallin A chain (CRYAA), found in Balaenoptera acutorostrata (Common minke whale).